The primary structure comprises 600 residues: Probable translation initiation factor IF-2 (600 aa).

The 218-residue stretch at 10–227 (LRQPIVVVLG…LLAGLTQRYL (218 aa)) folds into the tr-type G domain. The segment at 19 to 26 (GHVDHGKT) is G1. Residue 19-26 (GHVDHGKT) participates in GTP binding. A G2 region spans residues 44–48 (EMTQE). The G3 stretch occupies residues 83 to 86 (DTPG). Residues 83–87 (DTPGH) and 137–140 (NKID) contribute to the GTP site. Positions 137–140 (NKID) are G4. Residues 205–207 (SAK) are G5.

It belongs to the TRAFAC class translation factor GTPase superfamily. Classic translation factor GTPase family. IF-2 subfamily.

Its function is as follows. Function in general translation initiation by promoting the binding of the formylmethionine-tRNA to ribosomes. Seems to function along with eIF-2. This is Probable translation initiation factor IF-2 from Saccharolobus solfataricus (strain ATCC 35092 / DSM 1617 / JCM 11322 / P2) (Sulfolobus solfataricus).